The chain runs to 609 residues: Glutamine--fructose-6-phosphate aminotransferase [isomerizing] (609 aa).

C2 (nucleophile; for GATase activity) is an active-site residue. Residues 2-219 (CGIVGYIGGR…DGECARLTRD (218 aa)) form the Glutamine amidotransferase type-2 domain. SIS domains follow at residues 285–424 (SSDL…LRGT) and 458–599 (LARE…VDQP). The For Fru-6P isomerization activity role is filled by K604.

In terms of assembly, homodimer.

The protein localises to the cytoplasm. The enzyme catalyses D-fructose 6-phosphate + L-glutamine = D-glucosamine 6-phosphate + L-glutamate. Functionally, catalyzes the first step in hexosamine metabolism, converting fructose-6P into glucosamine-6P using glutamine as a nitrogen source. The protein is Glutamine--fructose-6-phosphate aminotransferase [isomerizing] of Gloeobacter violaceus (strain ATCC 29082 / PCC 7421).